Consider the following 101-residue polypeptide: Ubiquitin-related modifier 1 (101 aa).

Gly-101 bears the 1-thioglycine mark. Gly-101 participates in a covalent cross-link: Glycyl lysine isopeptide (Gly-Lys) (interchain with K-? in acceptor proteins).

It belongs to the URM1 family. As to quaternary structure, component of a complex at least composed of URM1, CTU2/NCS2 and CTU1/ATPBD3. In terms of processing, C-terminal thiocarboxylation occurs in 2 steps, it is first acyl-adenylated (-COAMP) via the hesA/moeB/thiF part of MOCS3, then thiocarboxylated (-COSH) via the rhodanese domain of MOCS3.

It localises to the cytoplasm. It participates in tRNA modification; 5-methoxycarbonylmethyl-2-thiouridine-tRNA biosynthesis. Acts as a sulfur carrier required for 2-thiolation of mcm(5)S(2)U at tRNA wobble positions of cytosolic tRNA(Lys), tRNA(Glu) and tRNA(Gln). Serves as sulfur donor in tRNA 2-thiolation reaction by being thiocarboxylated (-COSH) at its C-terminus by MOCS3. The sulfur is then transferred to tRNA to form 2-thiolation of mcm(5)S(2)U. Also acts as a ubiquitin-like protein (UBL) that is covalently conjugated via an isopeptide bond to lysine residues of target proteins such as MOCS3, ATPBD3, CTU2, USP15 and CAS. The thiocarboxylated form serves as substrate for conjugation and oxidative stress specifically induces the formation of UBL-protein conjugates. In Homo sapiens (Human), this protein is Ubiquitin-related modifier 1.